A 405-amino-acid chain; its full sequence is Potassium channel subfamily K member 18 (405 aa).

A helical transmembrane segment spans residues 43–63 (LPGLCFLCCLVTYALVGAALF). Asparagine 94 is a glycosylation site (N-linked (GlcNAc...) asparagine). The pore-forming intramembrane region spans 125-151 (FLSALFFCCTVFSTVGYGHMYPVTRLG). K(+) contacts are provided by threonine 138, valine 139, glycine 140, and tyrosine 141. The selectivity filter 1 stretch occupies residues 138–143 (TVGYGH). The helical transmembrane segment at 153 to 173 (FLCMLYALFGIPLMFLVLTDI) threads the bilayer. Residues 221-226 (PQIVID) form an interaction with calcineurin region. The interaction with YWHAH stretch occupies residues 272-277 (RSNSCP). 2 positions are modified to phosphoserine: serine 275 and serine 287. Residues 304–324 (IPLPVIALVIFAYISCAAAIL) form a helical membrane-spanning segment. The pore-forming intramembrane region spans 337-351 (FYFCFVTLTTIGFGD). The segment at 346–351 (TIGFGD) is selectivity filter 2. A helical membrane pass occupies residues 358–378 (HFFLFFSIYIIVGMEILFIAF).

The protein belongs to the two pore domain potassium channel (TC 1.A.1.8) family. As to quaternary structure, homodimer. Heterodimer with KCNK2. Heterodimer with KCNK10. Interacts with calcineurin. Interacts with YWHAH, in a phosphorylation-dependent manner. Phosphorylation of Ser-275 is required for the binding of 14-3-3eta/YWHAH. Calcineurin-mediated dephosphorylation of Ser-287 enhances channel activity. Post-translationally, N-glycosylated.

Its subcellular location is the cell membrane. The enzyme catalyses K(+)(in) = K(+)(out). Activated by volatile anesthetics, such as isoflurane and inhibited by local anesthetics such as bupivacaine and lidocaine. Inhibited by extracellular acidic pH. Inhibited by Zn(2+) ions. K(+) channel that conducts outward and inward rectifying currents at depolarized and hyperpolarized membrane potentials, respectively. The outward rectifying currents are voltage-dependent, coupled to K(+) electrochemical gradient across the membrane, whereas the inward currents can be induced in response to activation of Ca(2+)-mobilizing receptors. Homo- and heterodimerizes to form functional channels with distinct regulatory and gating properties. In trigeminal ganglia sensory neurons, the heterodimers of KCNK18/TRESK and KCNK2/TREK-1 or KCNK10/TREK-2 inhibit neuronal firing and neurogenic inflammation by stabilizing the resting membrane potential at K(+) equilibrium potential as well as by regulating the threshold of action potentials and the spike frequency. In thymocytes, conducts K(+) currents upon T cell receptor (TCR) signaling leading to sustained Ca(2+) influx and NF-kappa-B activation, FOXP3 transcription and positive selection of regulatory T cell (Treg) progenitor subsets. Appears to mediate the analgesics effects of hydroxy-alpha-sanshool, a metabolite naturally present in Schezuan pepper and other Xanthoxylum plants. In Rattus norvegicus (Rat), this protein is Potassium channel subfamily K member 18 (Kcnk18).